The sequence spans 478 residues: NAD-dependent malic enzyme (478 aa).

Positions 12-86 (TIRLQFEKDI…GVKIVNVSDR (75 aa)) constitute an ACT domain. The active-site Proton donor is the Y114. K169 (proton acceptor) is an active-site residue. A divalent metal cation contacts are provided by E211, D212, and D237. NAD(+) is bound by residues 270–273 (IGAA), N363, and N393.

This sequence belongs to the malic enzymes family. As to quaternary structure, homotetramer. It depends on Mg(2+) as a cofactor. Requires Mn(2+) as cofactor.

It catalyses the reaction (S)-malate + NAD(+) = pyruvate + CO2 + NADH. It carries out the reaction oxaloacetate + H(+) = pyruvate + CO2. Its activity is regulated as follows. The activity is enhanced 5-7 times by ammonium and potassium. Functionally, in addition to the NAD-dependent oxidative decarboxylation of L-malate, the enzyme catalyzes the decarboxylation of oxaloacetate. The chain is NAD-dependent malic enzyme from Geobacillus stearothermophilus (Bacillus stearothermophilus).